A 377-amino-acid chain; its full sequence is Carbamoyl phosphate synthase small chain (377 aa).

Residues 1 to 186 (MNTPALLVLA…LGKGFVTPDK (186 aa)) form a CPSase region. The L-glutamine site is built by serine 47, glycine 238, and glycine 240. The 188-residue stretch at 190–377 (HVVAYDFGVK…IGNMKAAKQA (188 aa)) folds into the Glutamine amidotransferase type-1 domain. Cysteine 266 (nucleophile) is an active-site residue. Residues leucine 267, glutamine 270, asparagine 308, glycine 310, and phenylalanine 311 each coordinate L-glutamine. Catalysis depends on residues histidine 350 and glutamate 352.

This sequence belongs to the CarA family. In terms of assembly, composed of two chains; the small (or glutamine) chain promotes the hydrolysis of glutamine to ammonia, which is used by the large (or ammonia) chain to synthesize carbamoyl phosphate. Tetramer of heterodimers (alpha,beta)4.

It catalyses the reaction hydrogencarbonate + L-glutamine + 2 ATP + H2O = carbamoyl phosphate + L-glutamate + 2 ADP + phosphate + 2 H(+). The catalysed reaction is L-glutamine + H2O = L-glutamate + NH4(+). It participates in amino-acid biosynthesis; L-arginine biosynthesis; carbamoyl phosphate from bicarbonate: step 1/1. The protein operates within pyrimidine metabolism; UMP biosynthesis via de novo pathway; (S)-dihydroorotate from bicarbonate: step 1/3. Its function is as follows. Small subunit of the glutamine-dependent carbamoyl phosphate synthetase (CPSase). CPSase catalyzes the formation of carbamoyl phosphate from the ammonia moiety of glutamine, carbonate, and phosphate donated by ATP, constituting the first step of 2 biosynthetic pathways, one leading to arginine and/or urea and the other to pyrimidine nucleotides. The small subunit (glutamine amidotransferase) binds and cleaves glutamine to supply the large subunit with the substrate ammonia. This is Carbamoyl phosphate synthase small chain from Neisseria gonorrhoeae.